Reading from the N-terminus, the 222-residue chain is RING finger protein 141 (222 aa).

The segment at 147–184 (CCICMDGKADLILPCAHSFCQKCIDKWSGQSRNCPVCR) adopts an RING-type zinc-finger fold.

The protein is RING finger protein 141 (rnf141) of Danio rerio (Zebrafish).